The following is a 799-amino-acid chain: ATP-dependent RNA helicase DBP7 (799 aa).

Disordered stretches follow at residues 34–177 (KALR…RRIR) and 201–229 (DRIA…NAAL). Composition is skewed to basic and acidic residues over residues 35 to 49 (ALRE…KKEQ), 56 to 66 (IEDRMKRREQD), 73 to 100 (KPYD…KSYD), 114 to 132 (EKYQ…ERWV), and 139 to 172 (NRRD…DGSL). Residues 208 to 220 (VQMEDEEEEEAEN) show a composition bias toward acidic residues. The Q motif motif lies at 233–261 (TTFSGLGCSQRLVDALVGMQLAKPTKIQR). The Helicase ATP-binding domain occupies 265–465 (PRLIQRERDL…KSTLKDADWV (201 aa)). ATP-binding positions include 278-285 (AQTGSGKT) and 306-313 (TGLFAVIL). A DEAD box motif is present at residues 391-394 (DEGD). The Helicase C-terminal domain maps to 511 to 679 (DILQSSEKTN…NILAAGFGGK (169 aa)). The interval 750–799 (KLGKKKDPEKIKVNKDGSLDETQARKKMLDRSRKHVYNSGESAMGGYVLE) is disordered. Basic and acidic residues predominate over residues 754–780 (KKDPEKIKVNKDGSLDETQARKKMLDR).

This sequence belongs to the DEAD box helicase family. DDX31/DBP7 subfamily.

It localises to the nucleus. The protein localises to the nucleolus. The catalysed reaction is ATP + H2O = ADP + phosphate + H(+). Functionally, ATP-binding RNA helicase involved in the biogenesis of 60S ribosomal subunits and is required for the normal formation of 25S and 5.8S rRNAs. The sequence is that of ATP-dependent RNA helicase DBP7 (DBP7) from Yarrowia lipolytica (strain CLIB 122 / E 150) (Yeast).